The sequence spans 299 residues: Protoheme IX farnesyltransferase (299 aa).

The next 9 membrane-spanning stretches (helical) occupy residues 25-45 (VVLLMLITSLVGMFLATRAGV), 47-67 (WTVLLFGNLGIGLCAGAAAAV), 95-115 (AAAIAFALLLATAGMGLLLLF), 119-139 (LAAWLTLASLLGYAVIYTGFL), 147-167 (IVIGGLAGAAPPLLGWVAVTG), 173-193 (PLLLVLIIFAWTPPHFWALAI), 218-238 (VHILLYTLVMFAVTLLPYAIH), 243-263 (LYLVCALLLGARFLHWAWVLY), and 279-299 (IWYLFLLFIALLADHYLLLNI).

It belongs to the UbiA prenyltransferase family. Protoheme IX farnesyltransferase subfamily.

The protein resides in the cell inner membrane. It carries out the reaction heme b + (2E,6E)-farnesyl diphosphate + H2O = Fe(II)-heme o + diphosphate. It participates in porphyrin-containing compound metabolism; heme O biosynthesis; heme O from protoheme: step 1/1. Its function is as follows. Converts heme B (protoheme IX) to heme O by substitution of the vinyl group on carbon 2 of heme B porphyrin ring with a hydroxyethyl farnesyl side group. In Ectopseudomonas mendocina (strain ymp) (Pseudomonas mendocina), this protein is Protoheme IX farnesyltransferase.